The chain runs to 219 residues: Uracil-DNA glycosylase (219 aa).

Asp63 serves as the catalytic Proton acceptor.

The protein belongs to the uracil-DNA glycosylase (UDG) superfamily. UNG family.

It localises to the cytoplasm. The enzyme catalyses Hydrolyzes single-stranded DNA or mismatched double-stranded DNA and polynucleotides, releasing free uracil.. Functionally, excises uracil residues from the DNA which can arise as a result of misincorporation of dUMP residues by DNA polymerase or due to deamination of cytosine. The sequence is that of Uracil-DNA glycosylase from Mesomycoplasma hyopneumoniae (strain 7448) (Mycoplasma hyopneumoniae).